The primary structure comprises 279 residues: Phenylalanine 3-hydroxylase (279 aa).

His-140, His-145, and Glu-186 together coordinate Fe cation.

This sequence belongs to the biopterin-dependent aromatic amino acid hydroxylase family. Fe(2+) serves as cofactor.

The enzyme catalyses (6R)-L-erythro-5,6,7,8-tetrahydrobiopterin + L-phenylalanine + O2 = 3-hydroxy-L-phenylalanine + (4aS,6R)-4a-hydroxy-L-erythro-5,6,7,8-tetrahydrobiopterin. In vitro, catalyzes the highly regiospecific C-3 hydroxylation of L-phenylalanine (L-Phe) to yield 3-hydroxy-L-phenylalanine (meta-Tyr), an amino acid found in bacterial secondary metabolites such as sanglifehrin A and some pacidamycins. Tetrahydrobiopterin (BH4) seems to be the physiological pterin, however the hydroxylase is also able to use 6-methyltetrahydropterin (6-MePH4). In Streptomyces coeruleorubidus, this protein is Phenylalanine 3-hydroxylase.